We begin with the raw amino-acid sequence, 101 residues long: NAD(P)H-quinone oxidoreductase subunit 4L, chloroplastic (101 aa).

Transmembrane regions (helical) follow at residues 2–22 (MLEH…YGLI), 32–52 (MCLE…SDFF), and 61–81 (ILSI…LAIV).

Belongs to the complex I subunit 4L family. As to quaternary structure, NDH is composed of at least 16 different subunits, 5 of which are encoded in the nucleus.

The protein resides in the plastid. Its subcellular location is the chloroplast thylakoid membrane. It catalyses the reaction a plastoquinone + NADH + (n+1) H(+)(in) = a plastoquinol + NAD(+) + n H(+)(out). It carries out the reaction a plastoquinone + NADPH + (n+1) H(+)(in) = a plastoquinol + NADP(+) + n H(+)(out). Functionally, NDH shuttles electrons from NAD(P)H:plastoquinone, via FMN and iron-sulfur (Fe-S) centers, to quinones in the photosynthetic chain and possibly in a chloroplast respiratory chain. The immediate electron acceptor for the enzyme in this species is believed to be plastoquinone. Couples the redox reaction to proton translocation, and thus conserves the redox energy in a proton gradient. This chain is NAD(P)H-quinone oxidoreductase subunit 4L, chloroplastic, found in Buxus microphylla (Littleleaf boxwood).